The sequence spans 647 residues: Threonine--tRNA ligase (647 aa).

Residues 1 to 61 (MINITFPDGA…TEDGSIEIVT (61 aa)) form the TGS domain. The segment at 242–540 (DHRKLGKELD…LIENYKGAFP (299 aa)) is catalytic. 3 residues coordinate Zn(2+): cysteine 336, histidine 387, and histidine 517.

Belongs to the class-II aminoacyl-tRNA synthetase family. Homodimer. Requires Zn(2+) as cofactor.

Its subcellular location is the cytoplasm. The catalysed reaction is tRNA(Thr) + L-threonine + ATP = L-threonyl-tRNA(Thr) + AMP + diphosphate + H(+). In terms of biological role, catalyzes the attachment of threonine to tRNA(Thr) in a two-step reaction: L-threonine is first activated by ATP to form Thr-AMP and then transferred to the acceptor end of tRNA(Thr). Also edits incorrectly charged L-seryl-tRNA(Thr). This Streptococcus pneumoniae serotype 2 (strain D39 / NCTC 7466) protein is Threonine--tRNA ligase.